Consider the following 513-residue polypeptide: MAAESDVLSEIEVLQSIYLDELNVTQNDEGGWTVSLVLHPSTAEDCLSQFVRLTLTMDLDSQYPYSSPYISIHNPRGLSDDKLLSLQKSLQMEAEECVGTPVLYQLIERAKEILTDSNIPHGNCVICLYDFKEGEVFTKTSCYHYFHSHCLGRYITHSEMELKDRERELEEDKTRDRTEEEELAVVCPVCRESLTYDLDALLSSPAPVLCQQEDAVIGGEFKKKWEALQKILERQKEKGGVIDPEAESNRFLIHINEAPVNLSDTPGMTDSSGAESSQSLPSSSPDSTSTTQTSQNQHTAGQPQRKHTGDFKRGRRGRGAGRGGPARHMVPAPGEERLGKHIQSSDKINSANSGPTNTTSQVESTAQRQACELSENTAQLRQPLTNEENKPVSQDMLTSEPKDGQEVSQQKECISKEVTQTILQEGHPEREHVGRGDKRGSRGSARHHGHWQDRNYKGPGHWDNSGSAGHRGGAYRTREGGAGRGHRGGGAYRGGGRGMHQRVEKEFRKEGVL.

Positions 9 to 117 (SEIEVLQSIY…ERAKEILTDS (109 aa)) constitute an RWD domain. 8 residues coordinate Zn(2+): cysteine 124, cysteine 127, cysteine 142, histidine 144, histidine 147, cysteine 150, cysteine 187, and cysteine 190. The RING-type; atypical zinc-finger motif lies at 124–191 (CVICLYDFKE…ELAVVCPVCR (68 aa)). A disordered region spans residues 261–513 (NLSDTPGMTD…EKEFRKEGVL (253 aa)). A compositionally biased stretch (low complexity) spans 271 to 297 (SSGAESSQSLPSSSPDSTSTTQTSQNQ). Composition is skewed to polar residues over residues 345–397 (SDKI…QDML) and 406–423 (EVSQ…QTIL). Residues 426–440 (GHPEREHVGRGDKRG) show a composition bias toward basic and acidic residues. The span at 482-498 (AGRGHRGGGAYRGGGRG) shows a compositional bias: gly residues. Over residues 501–513 (QRVEKEFRKEGVL) the composition is skewed to basic and acidic residues.

This sequence belongs to the RNF25 family.

It is found in the cytoplasm. It carries out the reaction S-ubiquitinyl-[E2 ubiquitin-conjugating enzyme]-L-cysteine + [acceptor protein]-L-lysine = [E2 ubiquitin-conjugating enzyme]-L-cysteine + N(6)-ubiquitinyl-[acceptor protein]-L-lysine.. Its pathway is protein modification; protein ubiquitination. Its function is as follows. E3 ubiquitin-protein ligase that plays a key role in the RNF14-RNF25 translation quality control pathway, a pathway that takes place when a ribosome has stalled during translation, and which promotes ubiquitination and degradation of translation factors on stalled ribosomes. May also acts as a positive regulator of the Wnt signaling. In Danio rerio (Zebrafish), this protein is E3 ubiquitin-protein ligase RNF25.